Here is a 499-residue protein sequence, read N- to C-terminus: 2,3-bisphosphoglycerate-independent phosphoglycerate mutase (499 aa).

Positions 10 and 60 each coordinate Mn(2+). The active-site Phosphoserine intermediate is the Ser-60. Substrate is bound by residues His-121, 151 to 152, Arg-182, Arg-188, 253 to 256, and Lys-326; these read RD and RPDR. The Mn(2+) site is built by Asp-391, His-395, Asp-434, His-435, and His-452.

It belongs to the BPG-independent phosphoglycerate mutase family. Monomer. The cofactor is Mn(2+).

It carries out the reaction (2R)-2-phosphoglycerate = (2R)-3-phosphoglycerate. It functions in the pathway carbohydrate degradation; glycolysis; pyruvate from D-glyceraldehyde 3-phosphate: step 3/5. Its function is as follows. Catalyzes the interconversion of 2-phosphoglycerate and 3-phosphoglycerate. This is 2,3-bisphosphoglycerate-independent phosphoglycerate mutase from Metamycoplasma hominis (strain ATCC 23114 / DSM 25592 / NBRC 14850 / NCTC 10111 / PG21) (Mycoplasma hominis).